A 155-amino-acid chain; its full sequence is Small ribosomal subunit protein uS7c (155 aa).

It belongs to the universal ribosomal protein uS7 family. As to quaternary structure, part of the 30S ribosomal subunit.

Its subcellular location is the plastid. It localises to the chloroplast. Its function is as follows. One of the primary rRNA binding proteins, it binds directly to 16S rRNA where it nucleates assembly of the head domain of the 30S subunit. The chain is Small ribosomal subunit protein uS7c (rps7) from Pinus thunbergii (Japanese black pine).